A 363-amino-acid polypeptide reads, in one-letter code: UDP-N-acetylglucosamine--N-acetylmuramyl-(pentapeptide) pyrophosphoryl-undecaprenol N-acetylglucosamine transferase (363 aa).

UDP-N-acetyl-alpha-D-glucosamine-binding positions include 14 to 16, arginine 171, serine 200, and glutamine 290; that span reads TGG.

It belongs to the glycosyltransferase 28 family. MurG subfamily.

It localises to the cell inner membrane. The enzyme catalyses di-trans,octa-cis-undecaprenyl diphospho-N-acetyl-alpha-D-muramoyl-L-alanyl-D-glutamyl-meso-2,6-diaminopimeloyl-D-alanyl-D-alanine + UDP-N-acetyl-alpha-D-glucosamine = di-trans,octa-cis-undecaprenyl diphospho-[N-acetyl-alpha-D-glucosaminyl-(1-&gt;4)]-N-acetyl-alpha-D-muramoyl-L-alanyl-D-glutamyl-meso-2,6-diaminopimeloyl-D-alanyl-D-alanine + UDP + H(+). It functions in the pathway cell wall biogenesis; peptidoglycan biosynthesis. Its function is as follows. Cell wall formation. Catalyzes the transfer of a GlcNAc subunit on undecaprenyl-pyrophosphoryl-MurNAc-pentapeptide (lipid intermediate I) to form undecaprenyl-pyrophosphoryl-MurNAc-(pentapeptide)GlcNAc (lipid intermediate II). This Borrelia garinii subsp. bavariensis (strain ATCC BAA-2496 / DSM 23469 / PBi) (Borreliella bavariensis) protein is UDP-N-acetylglucosamine--N-acetylmuramyl-(pentapeptide) pyrophosphoryl-undecaprenol N-acetylglucosamine transferase.